A 368-amino-acid polypeptide reads, in one-letter code: Anhydro-N-acetylmuramic acid kinase (368 aa).

13-20 (GTSLDGVD) is an ATP binding site.

Belongs to the anhydro-N-acetylmuramic acid kinase family.

It catalyses the reaction 1,6-anhydro-N-acetyl-beta-muramate + ATP + H2O = N-acetyl-D-muramate 6-phosphate + ADP + H(+). It participates in amino-sugar metabolism; 1,6-anhydro-N-acetylmuramate degradation. It functions in the pathway cell wall biogenesis; peptidoglycan recycling. Its function is as follows. Catalyzes the specific phosphorylation of 1,6-anhydro-N-acetylmuramic acid (anhMurNAc) with the simultaneous cleavage of the 1,6-anhydro ring, generating MurNAc-6-P. Is required for the utilization of anhMurNAc either imported from the medium or derived from its own cell wall murein, and thus plays a role in cell wall recycling. This chain is Anhydro-N-acetylmuramic acid kinase, found in Hahella chejuensis (strain KCTC 2396).